A 1200-amino-acid polypeptide reads, in one-letter code: MASGLIDTNFSSTLANGMSGCDQSTVESLADDPTDSPFDADDCLKVRKYWCFLLSSIFTFLAGLLVVLLWRAFAFVCCRKEPDLGPNDPKQKEQKASRNKQEFEGTFMTEAKDWAGELISGQTTTGRILVVLVFILSIASLIIYFVDASSEEVERCQKWSNNITQQIDLAFNIFFMVYFFIRFIAASDKLWFMLEMYSFVDYFTIPPSFVSIYLDRTWIGLRFLRALRLMTVPDILQYLNVLKTSSSIRLAQLVSIFISVWLTAAGIIHLLENSGDPLDFNNAHRLSYWTCVYFLIVTMSTVGYGDVYCETVLGRTFLVFFLLVGLAMFASSIPEIIELVGSGNKYGGELKREHGKRHIVVCGHITYESVSHFLKDFLHEDREDVDVEVVFLHRKPPDLELEGLFKRHFTTVEFFQGTIMNPIDLQRVKVHEADACLVLANKYCQDPDAEDAANIMRVISIKNYSDDIRVIIQLMQYHNKAYLLNIPSWDWKQGDDVICLAELKLGFIAQSCLAPGFSTMMANLFAMRSFKTSPDMQSWTNDYLRGTGMEMYTETLSPTFIGIPFAQATELCFSKLKLLLLAIEIKGAEEGADSKISINPRGAKIQANTQGFFIAQSADEVKRAWFYCKACHEDIKDETLIKKCKCKNLTVQPRSKFDDLDEHHPAPTFTPPELPKRVHVRGSVSGDITRDREDTNLLNRNVRRPNGTGNGTGGMHHMNNTAAAAAAAAAAGKQVNKVKPTVNVSRQVEGQVISPSQYNRPTSRSSGTGTQNQNGGVSLPAGIADDQSKDFDFEKTEMKYDSTGMFHWSPAKSLEDCILDRNQAAMTVLNGHVVVCLFADPDSPLIGLRNLVMPLRASNFHYHELKHVVIVGSVDYIRREWKMLQNLPKISVLNGSPLSRADLRAVNVNLCDMCCILSAKVPSNDDPTLADKEAILASLNIKAMTFDDTIGVLSQRGPEFDNLSATAGSPIVLQRRGSVYGANVPMITELVNDSNVQFLDQDDDDDPDTELYLTQPFACGTAFAVSVLDSLMSTTYFNQNALTLIRSLITGGATPELELILAEGAGLRGGYSTVESLSNRDRCRVGQISLYDGPLAQFGECGKYGDLFVAALKSYGMLCIGLYRFRDTSSSCDASSKRYVITNPPDDFSLLPTDQVFVLMQFDPGLEYKPPAVRAPAGGRGTNTQGSGVGGGGSNKDDNS.

The Extracellular segment spans residues Met1 to Lys48. Residues Tyr49–Leu69 traverse the membrane as a helical segment. The Cytoplasmic segment spans residues Trp70–Arg127. A helical transmembrane segment spans residues Ile128 to Ser149. Residues Ser150 to Thr164 lie on the Extracellular side of the membrane. A helical transmembrane segment spans residues Gln165–Ala185. Topologically, residues Ala186 to Lys189 are cytoplasmic. A helical membrane pass occupies residues Leu190–Val210. Over Ser211–Leu214 the chain is Extracellular. The helical; Voltage-sensor transmembrane segment at Asp215–Ile235 threads the bilayer. At Leu236–Leu250 the chain is on the cytoplasmic side. The helical transmembrane segment at Ala251–Leu271 threads the bilayer. At Glu272 to His284 the chain is on the extracellular side. Positions Arg285–Val307 form an intramembrane region, pore-forming. Residues Thr301–Tyr304 carry the Selectivity for potassium motif. The Extracellular segment spans residues Tyr308–Thr316. A helical transmembrane segment spans residues Phe317–Ile337. The Cytoplasmic portion of the chain corresponds to Glu338–Ser1200. Residues Lys356–Ile498 enclose the RCK N-terminal 1 domain. The tract at residues Leu505 to Phe525 is segment S7. Positions Ile563–Ile583 are segment S8. Disordered regions lie at residues Arg681 to Gly713 and Arg746 to Asp785. The span at Arg746–Gly776 shows a compositional bias: polar residues. Residues Val828–Leu848 are segment S9. The region spanning Asn830–Gln974 is the RCK N-terminal 2 domain. Residue Ser978 is modified to Phosphoserine. Residues Thr988–Glu1010 carry the Calcium bowl motif. A segment S10 region spans residues Phe1017–Phe1037. The disordered stretch occupies residues Pro1170–Ser1200.

It belongs to the potassium channel family. Calcium-activated (TC 1.A.1.3) subfamily. Slo sub-subfamily. Homotetramer; which constitutes the calcium-activated potassium channel. Interacts with Slip1. Interacts with Slob, and, indirectly with 14-3-3-zeta via its interaction with Slob. Interacts with Pka-C1 and Src kinases, which can bind simultaneously to it. Post-translationally, phosphorylated. Phosphorylation may be mediated by both PKA and SRC kinases, which activate the channel activity. Phosphorylation by PKA is however unclear. Indeed, although modulation of channel activity requires Pka-C1, it does not interact with the whole PKA holoenzyme. Moreover, modulation of activity does not depend upon phosphorylation of Ser-978. As to expression, expressed in muscle cells, neurons of the CNS and PNS, mushroom bodies, a limited number of cells in embryonic and larval midgut and in epithelial-derived tracheal cells. During pupariation and embryogenesis, it is expressed in muscles many hours prior to the appearance of functional channels.

It is found in the membrane. In terms of biological role, potassium channel activated by both membrane depolarization or increase in cytosolic Ca(2+) that mediates export of K(+). Its activation dampens the excitatory events that elevate the cytosolic Ca(2+) concentration and/or depolarize the cell membrane. It therefore contributes to repolarization of the membrane potential. Kinetics are determined by alternative splicing, phosphorylation status and its combination interaction with Slob and 14-3-3-zeta. While the interaction with Slob1 alone increases its activity, its interaction with both Slob1 and 14-3-3-zeta decreases its activity. The protein is Calcium-activated potassium channel slowpoke (slo) of Drosophila melanogaster (Fruit fly).